The following is a 449-amino-acid chain: NADH-quinone oxidoreductase subunit H (449 aa).

Helical transmembrane passes span 29–49 (ILLKAVAVFAFLLLMTLFAIV), 96–116 (PIFILAPIVSAVPAFLAFAVI), 136–156 (LPVSVLYLLAAASLGVYGLIL), 177–197 (IISYEVAMGLAFVAVFIYAGT), 211–231 (WYIVLVPSFVLYCISMVGETN), 259–279 (FFFLAEYINMVTVSAIATTLF), 298–318 (WVPLIWFVLKLLAFLFFFIWL), 330–350 (FMSFGWKVLIPVGLVWVLAVA), and 365–385 (WLVGFGVVVGILLIVALIDPG). The segment covering 393–402 (LEEAEQRKLA) has biased composition (basic and acidic residues). Residues 393–449 (LEEAEQRKLAEAPSLDRIPWPPPPQAAGRGRPAVSAGASANGSSTVIPADPGPRQER) are disordered. Residues 418–436 (AAGRGRPAVSAGASANGSS) show a composition bias toward low complexity.

The protein belongs to the complex I subunit 1 family. As to quaternary structure, NDH-1 is composed of 14 different subunits. Subunits NuoA, H, J, K, L, M, N constitute the membrane sector of the complex.

The protein localises to the cell membrane. It carries out the reaction a quinone + NADH + 5 H(+)(in) = a quinol + NAD(+) + 4 H(+)(out). In terms of biological role, NDH-1 shuttles electrons from NADH, via FMN and iron-sulfur (Fe-S) centers, to quinones in the respiratory chain. The immediate electron acceptor for the enzyme in this species is believed to be ubiquinone. Couples the redox reaction to proton translocation (for every two electrons transferred, four hydrogen ions are translocated across the cytoplasmic membrane), and thus conserves the redox energy in a proton gradient. This subunit may bind ubiquinone. The polypeptide is NADH-quinone oxidoreductase subunit H (Frankia casuarinae (strain DSM 45818 / CECT 9043 / HFP020203 / CcI3)).